Consider the following 97-residue polypeptide: Class II hydrophobin 3 (97 aa).

The signal sequence occupies residues 1–16; the sequence is MKFFAAAALFIAGVLA. 4 disulfide bridges follow: Cys-30/Cys-79, Cys-40/Cys-70, Cys-41/Cys-53, and Cys-80/Cys-91.

It belongs to the cerato-ulmin hydrophobin family. In terms of assembly, homodimer. Homodimers further self-assemble to form highly ordered films at water-air interfaces through intermolecular interactions.

The protein resides in the secreted. The protein localises to the cell wall. Functionally, aerial growth, conidiation, and dispersal of filamentous fungi in the environment rely upon a capability of their secreting small amphipathic proteins called hydrophobins (HPBs) with low sequence identity. Class I can self-assemble into an outermost layer of rodlet bundles on aerial cell surfaces, conferring cellular hydrophobicity that supports fungal growth, development and dispersal; whereas Class II form highly ordered films at water-air interfaces through intermolecular interactions but contribute nothing to the rodlet structure. The polypeptide is Class II hydrophobin 3 (Trichoderma asperellum (strain ATCC 204424 / CBS 433.97 / NBRC 101777)).